A 205-amino-acid chain; its full sequence is dITP/XTP pyrophosphatase (205 aa).

7-12 (SNNRGK) serves as a coordination point for substrate. Residues E39 and D68 each contribute to the Mg(2+) site. The active-site Proton acceptor is the D68. Residues A69, 154 to 157 (FGFD), K177, and 182 to 183 (HR) each bind substrate.

This sequence belongs to the HAM1 NTPase family. Homodimer. The cofactor is Mg(2+).

It catalyses the reaction XTP + H2O = XMP + diphosphate + H(+). The catalysed reaction is dITP + H2O = dIMP + diphosphate + H(+). It carries out the reaction ITP + H2O = IMP + diphosphate + H(+). Pyrophosphatase that catalyzes the hydrolysis of nucleoside triphosphates to their monophosphate derivatives, with a high preference for the non-canonical purine nucleotides XTP (xanthosine triphosphate), dITP (deoxyinosine triphosphate) and ITP. Seems to function as a house-cleaning enzyme that removes non-canonical purine nucleotides from the nucleotide pool, thus preventing their incorporation into DNA/RNA and avoiding chromosomal lesions. The polypeptide is dITP/XTP pyrophosphatase (Acidovorax ebreus (strain TPSY) (Diaphorobacter sp. (strain TPSY))).